The chain runs to 456 residues: Phosphomannomutase (456 aa).

Serine 98 acts as the Phosphoserine intermediate in catalysis. Mg(2+) contacts are provided by serine 98, aspartate 245, aspartate 247, and aspartate 249.

It belongs to the phosphohexose mutase family. Requires Mg(2+) as cofactor.

It catalyses the reaction alpha-D-mannose 1-phosphate = D-mannose 6-phosphate. Its pathway is nucleotide-sugar biosynthesis; GDP-alpha-D-mannose biosynthesis; alpha-D-mannose 1-phosphate from D-fructose 6-phosphate: step 2/2. Involved in the biosynthesis of the capsular polysaccharide colanic acid. The protein is Phosphomannomutase (manB) of Escherichia coli (strain K12).